The chain runs to 278 residues: Urease accessory protein UreD (278 aa).

The protein belongs to the UreD family. As to quaternary structure, ureD, UreF and UreG form a complex that acts as a GTP-hydrolysis-dependent molecular chaperone, activating the urease apoprotein by helping to assemble the nickel containing metallocenter of UreC. The UreE protein probably delivers the nickel.

It is found in the cytoplasm. In terms of biological role, required for maturation of urease via the functional incorporation of the urease nickel metallocenter. The chain is Urease accessory protein UreD from Deinococcus radiodurans (strain ATCC 13939 / DSM 20539 / JCM 16871 / CCUG 27074 / LMG 4051 / NBRC 15346 / NCIMB 9279 / VKM B-1422 / R1).